The sequence spans 480 residues: RuvB-like helicase 2 (480 aa).

76–83 (GPPSTGKT) is an ATP binding site.

This sequence belongs to the RuvB family. May form heterododecamers with RVB1. Component of the SWR1 chromatin remodeling complex, the INO80 chromatin remodeling complex, and of the R2TP complex.

The protein resides in the nucleus. The catalysed reaction is ATP + H2O = ADP + phosphate + H(+). Its function is as follows. DNA helicase which participates in several chromatin remodeling complexes, including the SWR1 and the INO80 complexes. The SWR1 complex mediates the ATP-dependent exchange of histone H2A for the H2A variant HZT1 leading to transcriptional regulation of selected genes by chromatin remodeling. The INO80 complex remodels chromatin by shifting nucleosomes and is involved in DNA repair. Also involved in pre-rRNA processing. The polypeptide is RuvB-like helicase 2 (RVB2) (Debaryomyces hansenii (strain ATCC 36239 / CBS 767 / BCRC 21394 / JCM 1990 / NBRC 0083 / IGC 2968) (Yeast)).